Reading from the N-terminus, the 133-residue chain is S-protein homolog 21 (133 aa).

The signal sequence occupies residues 1–21 (MKNLSIFLFVVGLCMISDVYG).

Belongs to the plant self-incompatibility (S1) protein family.

The protein localises to the secreted. This chain is S-protein homolog 21, found in Arabidopsis thaliana (Mouse-ear cress).